A 410-amino-acid chain; its full sequence is Aspartate aminotransferase (410 aa).

3 residues coordinate L-aspartate: Gly-47, Trp-135, and Asn-185. Position 249 is an N6-(pyridoxal phosphate)lysine (Lys-249). Arg-385 is a binding site for L-aspartate.

It belongs to the class-I pyridoxal-phosphate-dependent aminotransferase family. Homodimer. Pyridoxal 5'-phosphate is required as a cofactor.

Its subcellular location is the cytoplasm. It carries out the reaction L-aspartate + 2-oxoglutarate = oxaloacetate + L-glutamate. The enzyme catalyses L-2-aminoadipate + 2-oxoglutarate = 2-oxoadipate + L-glutamate. Its function is as follows. Catalyzes the reversible conversion of aspartate and 2-oxoglutarate to glutamate and oxaloacetate. Genetic evidence shows that this protein is involved in L-lysine catabolism. It may have 2-aminoadipate:2-oxoglutarate aminotransferase activity. The protein is Aspartate aminotransferase (aatB) of Rhizobium meliloti (strain 1021) (Ensifer meliloti).